Consider the following 631-residue polypeptide: Myotonin-protein kinase (631 aa).

Residues 1-592 (MSAEVRLRQL…PRPGLSEARC (592 aa)) are Cytoplasmic-facing. The region spanning 71-339 (FEILKVIGRG…AGDFQKHPFF (269 aa)) is the Protein kinase domain. ATP contacts are provided by residues 77–85 (IGRGAFSEV) and K100. D195 functions as the Proton acceptor in the catalytic mechanism. A phosphoserine; by autocatalysis mark is found at S216 and S228. T234 carries the phosphothreonine; by autocatalysis modification. The AGC-kinase C-terminal domain occupies 340–415 (FGLDWEGLRD…CCMAFRDNQV (76 aa)). Residues 464-532 (AETTVTLQQL…QERMEMLQAP (69 aa)) are a coiled coil. The chain crosses the membrane as a helical; Anchor for type IV membrane protein span at residues 593–613 (LLLFAAALAAAATLGCTGLVA). At 614-631 (YTGGLTPVWCFPGATFAP) the chain is on the lumenal side.

The protein belongs to the protein kinase superfamily. AGC Ser/Thr protein kinase family. DMPK subfamily. Homodimer; homodimerization stimulates the kinase activity. Interacts with HSPB2; may enhance DMPK kinase activity. Interacts with PLN; phosphorylates PLN. May interact with RAC1; may regulate DMPK kinase activity. Interacts with LMNA; may regulate nuclear envelope stability. It depends on Mg(2+) as a cofactor. In terms of processing, phosphorylated. Autophosphorylates. Phosphorylation by RAF1 may result in activation of DMPK. Proteolytic processing of the C-terminus may remove the transmembrane domain and release the kinase from membranes stimulating its activity. As to expression, expressed in all tissues tested, with a predominance in brain, skeletal muscle, heart, and other tissues containing smooth muscle. In the heart, expression is restricted to the cardiomyocytes in the ventricle and atrium.

The protein resides in the sarcoplasmic reticulum membrane. The protein localises to the cell membrane. It is found in the endoplasmic reticulum membrane. Its subcellular location is the nucleus outer membrane. It localises to the mitochondrion outer membrane. The protein resides in the cytoplasm. The protein localises to the cytosol. The catalysed reaction is L-seryl-[protein] + ATP = O-phospho-L-seryl-[protein] + ADP + H(+). It catalyses the reaction L-threonyl-[protein] + ATP = O-phospho-L-threonyl-[protein] + ADP + H(+). Its activity is regulated as follows. Coiled-coil-mediated oligomerization enhances the catalytic activity. Proteolytic processing of the C-terminus may release the protein from membranes and constitute a mean to regulate the enzyme. May be regulated by HSPB2, RAC1, RAF1 and G-protein second messengers. In terms of biological role, non-receptor serine/threonine protein kinase which is necessary for the maintenance of skeletal muscle structure and function. May play a role in myocyte differentiation and survival by regulating the integrity of the nuclear envelope and the expression of muscle-specific genes. May also phosphorylate PPP1R12A and inhibit the myosin phosphatase activity to regulate myosin phosphorylation. Also critical to the modulation of cardiac contractility and to the maintenance of proper cardiac conduction activity probably through the regulation of cellular calcium homeostasis. Phosphorylates PLN, a regulator of calcium pumps and may regulate sarcoplasmic reticulum calcium uptake in myocytes. May also phosphorylate FXYD1/PLM which is able to induce chloride currents. May also play a role in synaptic plasticity. The protein is Myotonin-protein kinase (Dmpk) of Mus musculus (Mouse).